The following is a 282-amino-acid chain: 4-hydroxybenzoate octaprenyltransferase (282 aa).

The next 9 membrane-spanning stretches (helical) occupy residues 17 to 37 (IGIL…NQGF), 40 to 60 (IDLL…GCVI), 90 to 110 (AFIL…KLPI), 113 to 133 (FYFA…KRFL), 135 to 155 (APQL…FIAS), 163 to 183 (FIVL…MYAM), 207 to 227 (LIIA…AINK), 231 to 251 (WFFY…LKLI), and 262 to 282 (AFLV…LALI).

It belongs to the UbiA prenyltransferase family. Mg(2+) is required as a cofactor.

It localises to the cell inner membrane. It carries out the reaction all-trans-octaprenyl diphosphate + 4-hydroxybenzoate = 4-hydroxy-3-(all-trans-octaprenyl)benzoate + diphosphate. It functions in the pathway cofactor biosynthesis; ubiquinone biosynthesis. Functionally, catalyzes the prenylation of para-hydroxybenzoate (PHB) with an all-trans polyprenyl group. Mediates the second step in the final reaction sequence of ubiquinone-8 (UQ-8) biosynthesis, which is the condensation of the polyisoprenoid side chain with PHB, generating the first membrane-bound Q intermediate 3-octaprenyl-4-hydroxybenzoate. This chain is 4-hydroxybenzoate octaprenyltransferase, found in Legionella pneumophila (strain Corby).